Reading from the N-terminus, the 332-residue chain is Nucleoid-associated protein VP2128 (332 aa).

This sequence belongs to the YejK family.

Its subcellular location is the cytoplasm. The protein resides in the nucleoid. This Vibrio parahaemolyticus serotype O3:K6 (strain RIMD 2210633) protein is Nucleoid-associated protein VP2128.